The following is a 171-amino-acid chain: Probable deoxyuridine 5'-triphosphate nucleotidohydrolase (171 aa).

The protein belongs to the dCTP deaminase family. Archaeal dUTPase subfamily.

It catalyses the reaction dUTP + H2O = dUMP + diphosphate + H(+). The protein operates within pyrimidine metabolism; dUMP biosynthesis; dUMP from dCTP (dUTP route): step 2/2. This enzyme is involved in nucleotide metabolism: it produces dUMP, the immediate precursor of thymidine nucleotides and it decreases the intracellular concentration of dUTP so that uracil cannot be incorporated into DNA. In Methanosarcina acetivorans (strain ATCC 35395 / DSM 2834 / JCM 12185 / C2A), this protein is Probable deoxyuridine 5'-triphosphate nucleotidohydrolase.